Reading from the N-terminus, the 247-residue chain is NAD-dependent protein deacetylase 2 (247 aa).

In terms of domain architecture, Deacetylase sirtuin-type spans 1-247 (MDQIRQLAQW…ASVRKQIQAE (247 aa)). NAD(+) contacts are provided by A23, T27, F34, R35, Q103, I105, D106, and H121. F34 contacts nicotinamide. I105 and D106 together coordinate nicotinamide. H121 functions as the Proton acceptor in the catalytic mechanism. Zn(2+) contacts are provided by C129, C132, C149, and C152. The NAD(+) site is built by T188, S189, N215, and I233.

Belongs to the sirtuin family. Class U subfamily. It depends on Zn(2+) as a cofactor.

The protein localises to the cytoplasm. It catalyses the reaction N(6)-acetyl-L-lysyl-[protein] + NAD(+) + H2O = 2''-O-acetyl-ADP-D-ribose + nicotinamide + L-lysyl-[protein]. Functionally, NAD-dependent protein deacetylase which modulates the activities of several enzymes which are inactive in their acetylated form. The protein is NAD-dependent protein deacetylase 2 of Geobacillus kaustophilus (strain HTA426).